A 443-amino-acid chain; its full sequence is Two-pore potassium channel 2 (443 aa).

The Cytoplasmic segment spans residues 1–144; it reads MANDGNGDNN…KTDQQSDSKT (144 aa). Residues 67–109 form a disordered region; that stretch reads SLPIDALSQNPSTSSSATTSFSDSTDLLLPLTEPNKPVRKSKP. The segment covering 72-98 has biased composition (low complexity); sequence ALSQNPSTSSSATTSFSDSTDLLLPLT. The helical transmembrane segment at 145–165 threads the bilayer; the sequence is IVNQAVALLVVYLSLGVLIYW. The pore-forming intramembrane region spans 181 to 200; the sequence is DALYFCIVTMCTIGYGDITP. A helical membrane pass occupies residues 208–228; the sequence is FSIFFVLVGFGFMDILLSGMV. Topologically, residues 229–274 are cytoplasmic; the sequence is TYVLDLQENYMLETARNESLNLNDRDKVRSYIIDVKKGRMRIRLKV. A helical transmembrane segment spans residues 275 to 295; the sequence is GLALGVVVLCLGFGVLIMHFV. The pore-forming intramembrane region spans 302–321; sequence DSFYFSVMSVTTVGYGDRAF. Residues 328-348 traverse the membrane as a helical segment; it reads LLAAMWLLVSTLAVARAILFL. At 349–443 the chain is on the cytoplasmic side; that stretch reads AESRVDKRNR…TKDLPTATSI (95 aa). EF-hand domains lie at 365 to 400 and 404 to 439; these read LGES…KMDK and KDIN…DLPT. Residues Asp-378, Asp-380, Asn-382, Cys-384, Glu-389, Asp-417, Ser-421, Arg-423, and Asp-428 each contribute to the Ca(2+) site.

This sequence belongs to the two pore domain potassium channel (TC 1.A.1.7) family. Homodimer. Expressed in roots, stems, leaves and flowers.

Its subcellular location is the vacuole membrane. Its function is as follows. Probable voltage-independent potassium-selective tonoplast ion channel. This chain is Two-pore potassium channel 2 (TPK2), found in Arabidopsis thaliana (Mouse-ear cress).